We begin with the raw amino-acid sequence, 131 residues long: Small ribosomal subunit protein uS8 (131 aa).

This sequence belongs to the universal ribosomal protein uS8 family. In terms of assembly, part of the 30S ribosomal subunit. Contacts proteins S5 and S12.

One of the primary rRNA binding proteins, it binds directly to 16S rRNA central domain where it helps coordinate assembly of the platform of the 30S subunit. The sequence is that of Small ribosomal subunit protein uS8 from Wolbachia pipientis wMel.